The primary structure comprises 352 residues: Lipase chaperone (352 aa).

Residues 7–28 (LSLVAVVVAGGLTLYWRWPAAV) form a helical membrane-spanning segment.

It belongs to the lipase chaperone family.

It localises to the cell inner membrane. Its function is as follows. May be involved in the folding of the extracellular lipase during its passage through the periplasm. This is Lipase chaperone (lifO) from Pseudomonas wisconsinensis.